The primary structure comprises 183 residues: Large ribosomal subunit protein eL18 (183 aa).

Positions 146–183 (HFGPAPGVPHSHTKPYVRSKGRKFEKARGRRKSRGFRV) are disordered. Composition is skewed to basic residues over residues 156–166 (SHTKPYVRSKG) and 173–183 (RGRRKSRGFRV).

This sequence belongs to the eukaryotic ribosomal protein eL18 family.

In Cicer arietinum (Chickpea), this protein is Large ribosomal subunit protein eL18 (RPL18).